Reading from the N-terminus, the 767-residue chain is Bifunctional lysine-specific demethylase and histidyl-hydroxylase NO66 (767 aa).

The tract at residues Thr21–Ser324 is disordered. Ser44 carries the post-translational modification Phosphoserine. Residues Ser46–Ser71 show a composition bias toward acidic residues. Residues Glu72–Ser81 are compositionally biased toward low complexity. The span at Phe82–Ser98 shows a compositional bias: acidic residues. 2 stretches are compositionally biased toward polar residues: residues Tyr127–Glu137 and Glu177–Pro199. Ser214 bears the Phosphoserine mark. The span at Pro262 to Val279 shows a compositional bias: polar residues. The span at Gly315 to Ser324 shows a compositional bias: basic and acidic residues. One can recognise a JmjC domain in the interval Cys420–Val565. His466, Asp468, and His531 together coordinate Fe cation.

This sequence belongs to the ROX family. NO66 subfamily. It depends on Fe(2+) as a cofactor.

The protein localises to the nucleus. It catalyses the reaction N(6),N(6)-dimethyl-L-lysyl(36)-[histone H3] + 2 2-oxoglutarate + 2 O2 = L-lysyl(36)-[histone H3] + 2 formaldehyde + 2 succinate + 2 CO2. In terms of biological role, oxygenase that can act as both a histone lysine demethylase and a ribosomal histidine hydroxylase. Specifically demethylates 'Lys-4' (H3K4me) and 'Lys-36' (H3K36me) of histone H3, thereby playing a central role in histone code. This Drosophila willistoni (Fruit fly) protein is Bifunctional lysine-specific demethylase and histidyl-hydroxylase NO66.